Here is a 467-residue protein sequence, read N- to C-terminus: 3-isopropylmalate dehydratase large subunit (467 aa).

Cys347, Cys407, and Cys410 together coordinate [4Fe-4S] cluster. A compositionally biased stretch (polar residues) spans 422-442; sequence QISASSSNRNFKGRQGSSSGR. The tract at residues 422-443 is disordered; sequence QISASSSNRNFKGRQGSSSGRT.

It belongs to the aconitase/IPM isomerase family. LeuC type 1 subfamily. In terms of assembly, heterodimer of LeuC and LeuD. The cofactor is [4Fe-4S] cluster.

The catalysed reaction is (2R,3S)-3-isopropylmalate = (2S)-2-isopropylmalate. It participates in amino-acid biosynthesis; L-leucine biosynthesis; L-leucine from 3-methyl-2-oxobutanoate: step 2/4. Its function is as follows. Catalyzes the isomerization between 2-isopropylmalate and 3-isopropylmalate, via the formation of 2-isopropylmaleate. The sequence is that of 3-isopropylmalate dehydratase large subunit from Nostoc punctiforme (strain ATCC 29133 / PCC 73102).